A 210-amino-acid polypeptide reads, in one-letter code: Troponin I, cardiac muscle (210 aa).

A disordered region spans residues 1–43; it reads MADGSSDAAREPRPAPAPIRRRSSNYRAYATEPHAKKKSKISA. N-acetylalanine is present on A2. S5 and S6 each carry phosphoserine. A phosphoserine; by PKA and PKD/PRKD1 mark is found at S23 and S24. Phosphotyrosine is present on Y26. T31 carries the post-translational modification Phosphothreonine; by STK4/MST1. An involved in binding TNC region spans residues 32–79; the sequence is EPHAKKKSKISASRKLQLKTLLLQIAKQELEREAEERRGEKGRALSTR. Phosphoserine; by PKC/PRKCE occurs at positions 42 and 44. At T51 the chain carries Phosphothreonine; by STK4/MST1. S77 is modified (phosphoserine). T78 bears the Phosphothreonine mark. 2 positions are modified to phosphothreonine; by STK4/MST1: T129 and T143. Residues 129 to 149 form an involved in binding TNC and actin region; that stretch reads TQKIFDLRGKFKRPTLRRVRI. S150 is modified (phosphoserine; by PAK3). S166 carries the post-translational modification Phosphoserine. At T181 the chain carries Phosphothreonine. A Phosphoserine modification is found at S199.

The protein belongs to the troponin I family. Binds to actin and tropomyosin. Interacts with TRIM63. Interacts with STK4/MST1. Phosphorylated at Ser-42 and Ser-44 by PRKCE; phosphorylation increases myocardium contractile dysfunction. Phosphorylated at Ser-23 and Ser-24 by PRKD1; phosphorylation reduces myofilament calcium sensitivity. Phosphorylated preferentially at Thr-31. Phosphorylation by STK4/MST1 alters its binding affinity to TNNC1 (cardiac Tn-C) and TNNT2 (cardiac Tn-T).

In terms of biological role, troponin I is the inhibitory subunit of troponin, the thin filament regulatory complex which confers calcium-sensitivity to striated muscle actomyosin ATPase activity. The sequence is that of Troponin I, cardiac muscle (TNNI3) from Homo sapiens (Human).